We begin with the raw amino-acid sequence, 202 residues long: Kunitz trypsin inhibitor 7 (202 aa).

The signal sequence occupies residues 1 to 25; that stretch reads MKTFRSMLISLLLVAITTTSGVVEG. A disulfide bridge links C69 with C115. Residues N93, N136, N144, and N198 are each glycosylated (N-linked (GlcNAc...) asparagine).

The protein belongs to the protease inhibitor I3 (leguminous Kunitz-type inhibitor) family.

Its function is as follows. Exhibits Kunitz trypsin protease inhibitor activity. The protein is Kunitz trypsin inhibitor 7 of Arabidopsis thaliana (Mouse-ear cress).